Here is a 264-residue protein sequence, read N- to C-terminus: H-2 class II histocompatibility antigen, E-B beta chain (264 aa).

An N-terminal signal peptide occupies residues 1-26; the sequence is MVWLPRVPCVAAVILLLTVLSPPMAL. Positions 27 to 121 are beta-1; it reads VRDSRPWFLE…ISDKFLVRRR (95 aa). Residues 27–225 are Extracellular-facing; the sequence is VRDSRPWFLE…KAQSTSAQNK (199 aa). 2 disulfide bridges follow: cysteine 38–cysteine 106 and cysteine 144–cysteine 200. A glycan (N-linked (GlcNAc...) asparagine) is linked at asparagine 46. The interval 122–225 is beta-2; sequence VEPTVTVYPT…KAQSTSAQNK (104 aa). Residues 124 to 214 form the Ig-like C1-type domain; sequence PTVTVYPTKT…PSLTDPVTVE (91 aa). A helical transmembrane segment spans residues 226-246; that stretch reads MLSGVGGFVLGLLFLGAGLFI. Over 247 to 264 the chain is Cytoplasmic; it reads YFRNQKGQSGLQPTGLLS.

Belongs to the MHC class II family. Ubiquitinated in immature dendritic cells leading to down-regulation of MHC class II.

It localises to the membrane. This Mus musculus (Mouse) protein is H-2 class II histocompatibility antigen, E-B beta chain (H2-Eb1).